The following is a 507-amino-acid chain: Maturase K (507 aa).

It belongs to the intron maturase 2 family. MatK subfamily.

The protein localises to the plastid. It is found in the chloroplast. In terms of biological role, usually encoded in the trnK tRNA gene intron. Probably assists in splicing its own and other chloroplast group II introns. In Nymphaea alba (White water-lily), this protein is Maturase K.